A 328-amino-acid chain; its full sequence is Malate dehydrogenase (328 aa).

NAD(+) is bound at residue 11 to 17 (GAAGQIG). Arg94 and Arg100 together coordinate substrate. Residues Asn107, Gln114, and 131 to 133 (VGN) contribute to the NAD(+) site. The substrate site is built by Asn133 and Arg164. His189 functions as the Proton acceptor in the catalytic mechanism.

The protein belongs to the LDH/MDH superfamily. MDH type 2 family.

The catalysed reaction is (S)-malate + NAD(+) = oxaloacetate + NADH + H(+). In terms of biological role, catalyzes the reversible oxidation of malate to oxaloacetate. The sequence is that of Malate dehydrogenase from Acinetobacter baylyi (strain ATCC 33305 / BD413 / ADP1).